Reading from the N-terminus, the 333-residue chain is NADH-quinone oxidoreductase subunit H (333 aa).

8 helical membrane-spanning segments follow: residues 15-35 (FFIF…FVTY), 88-108 (FILA…VIPF), 117-137 (IGVG…GVLT), 159-179 (ISYE…TGSL), 191-211 (VWYI…AVAE), 241-261 (FFML…TVLF), 273-293 (FIPG…LFIW), and 313-333 (VLLP…ELFF).

The protein belongs to the complex I subunit 1 family. NDH-1 is composed of 14 different subunits. Subunits NuoA, H, J, K, L, M, N constitute the membrane sector of the complex.

Its subcellular location is the cell membrane. It carries out the reaction a quinone + NADH + 5 H(+)(in) = a quinol + NAD(+) + 4 H(+)(out). NDH-1 shuttles electrons from NADH, via FMN and iron-sulfur (Fe-S) centers, to quinones in the respiratory chain. The immediate electron acceptor for the enzyme in this species is believed to be ubiquinone. Couples the redox reaction to proton translocation (for every two electrons transferred, four hydrogen ions are translocated across the cytoplasmic membrane), and thus conserves the redox energy in a proton gradient. This subunit may bind ubiquinone. The sequence is that of NADH-quinone oxidoreductase subunit H from Bacillus cytotoxicus (strain DSM 22905 / CIP 110041 / 391-98 / NVH 391-98).